We begin with the raw amino-acid sequence, 257 residues long: Probable enoyl-CoA hydratase echA17 (257 aa).

This sequence belongs to the enoyl-CoA hydratase/isomerase family.

The catalysed reaction is a (3S)-3-hydroxyacyl-CoA = a (2E)-enoyl-CoA + H2O. It carries out the reaction a 4-saturated-(3S)-3-hydroxyacyl-CoA = a (3E)-enoyl-CoA + H2O. In terms of biological role, could possibly oxidize fatty acids using specific components. The sequence is that of Probable enoyl-CoA hydratase echA17 (echA17) from Mycobacterium avium (strain 104).